Here is a 353-residue protein sequence, read N- to C-terminus: 3-isopropylmalate dehydrogenase (353 aa).

An NAD(+)-binding site is contributed by 75–88 (GPKWENLPHEHKPE). Substrate contacts are provided by Arg95, Arg105, Arg133, and Asp219. Mg(2+) is bound by residues Asp219, Asp243, and Asp247. 276-288 (GSAPDIAGKNIAN) serves as a coordination point for NAD(+).

It belongs to the isocitrate and isopropylmalate dehydrogenases family. LeuB type 1 subfamily. As to quaternary structure, homodimer. The cofactor is Mg(2+). Requires Mn(2+) as cofactor.

Its subcellular location is the cytoplasm. The catalysed reaction is (2R,3S)-3-isopropylmalate + NAD(+) = 4-methyl-2-oxopentanoate + CO2 + NADH. Its pathway is amino-acid biosynthesis; L-leucine biosynthesis; L-leucine from 3-methyl-2-oxobutanoate: step 3/4. Catalyzes the oxidation of 3-carboxy-2-hydroxy-4-methylpentanoate (3-isopropylmalate) to 3-carboxy-4-methyl-2-oxopentanoate. The product decarboxylates to 4-methyl-2 oxopentanoate. This chain is 3-isopropylmalate dehydrogenase, found in Chlorobium luteolum (strain DSM 273 / BCRC 81028 / 2530) (Pelodictyon luteolum).